A 213-amino-acid chain; its full sequence is Ribosomal RNA small subunit methyltransferase G (213 aa).

Residues Gly83, Leu88, 132 to 133 (IE), and Arg146 each bind S-adenosyl-L-methionine.

It belongs to the methyltransferase superfamily. RNA methyltransferase RsmG family.

Its subcellular location is the cytoplasm. It carries out the reaction guanosine(527) in 16S rRNA + S-adenosyl-L-methionine = N(7)-methylguanosine(527) in 16S rRNA + S-adenosyl-L-homocysteine. Its function is as follows. Specifically methylates the N7 position of guanine in position 527 of 16S rRNA. This Granulibacter bethesdensis (strain ATCC BAA-1260 / CGDNIH1) protein is Ribosomal RNA small subunit methyltransferase G.